The primary structure comprises 103 residues: Acylphosphatase-2 (103 aa).

Positions 13–103 constitute an Acylphosphatase-like domain; it reads SVDYEVFGRV…LQYNGFSTRY (91 aa). Catalysis depends on residues Arg-28 and Asn-46.

This sequence belongs to the acylphosphatase family.

The catalysed reaction is an acyl phosphate + H2O = a carboxylate + phosphate + H(+). The polypeptide is Acylphosphatase-2 (acyp2) (Xenopus tropicalis (Western clawed frog)).